The following is a 491-amino-acid chain: Cytosolic Fe-S cluster assembly factor NAR1 (491 aa).

The [4Fe-4S] cluster site is built by cysteine 20, cysteine 65, cysteine 68, cysteine 71, cysteine 177, cysteine 232, cysteine 414, and cysteine 418.

Belongs to the NARF family.

In terms of biological role, component of the cytosolic Fe/S protein assembly machinery. Required for maturation of extramitochondrial Fe/S proteins. May play a role in the transfer of pre-assembled Fe/S clusters to target apoproteins. This Yarrowia lipolytica (strain CLIB 122 / E 150) (Yeast) protein is Cytosolic Fe-S cluster assembly factor NAR1 (NAR1).